The primary structure comprises 154 residues: Large ribosomal subunit protein uL30 (154 aa).

The tract at residues 122–141 is disordered; that stretch reads RGGHDGIKTPASDGGQLGKH.

It belongs to the universal ribosomal protein uL30 family. As to quaternary structure, part of the 50S ribosomal subunit.

The polypeptide is Large ribosomal subunit protein uL30 (Halobacterium salinarum (strain ATCC 29341 / DSM 671 / R1)).